The chain runs to 148 residues: Deoxyuridine 5'-triphosphate nucleotidohydrolase (148 aa).

Substrate contacts are provided by residues 67–69 (RSG), asparagine 80, 84–86 (LID), and methionine 94.

It belongs to the dUTPase family. The cofactor is Mg(2+).

It carries out the reaction dUTP + H2O = dUMP + diphosphate + H(+). Its pathway is pyrimidine metabolism; dUMP biosynthesis; dUMP from dCTP (dUTP route): step 2/2. This enzyme is involved in nucleotide metabolism: it produces dUMP, the immediate precursor of thymidine nucleotides and it decreases the intracellular concentration of dUTP so that uracil cannot be incorporated into DNA. This chain is Deoxyuridine 5'-triphosphate nucleotidohydrolase, found in Francisella tularensis subsp. holarctica (strain FTNF002-00 / FTA).